A 323-amino-acid chain; its full sequence is Rhazimal reductase 2 (323 aa).

Position 53 (Asp-53) interacts with NADP(+). The active-site Proton donor is Tyr-58. NADP(+) contacts are provided by residues 167–168, Gln-189, 215–220, and 289–297; these read SN, WSPLLS, and DQIQQIPQR.

The protein belongs to the aldo/keto reductase family. In terms of assembly, monomer.

The enzyme catalyses rhazimol + NADP(+) = rhazimal + NADPH + 2 H(+). Its pathway is alkaloid biosynthesis. Its function is as follows. Oxidoreductase involved in the biosynthesis of akuammilan monoterpene indole alkaloids (MIAs) natural products, components with various biological properties such as antidiabetic, antibacterial, anti-inflammatory, anticancer, and antimalarial activities. Catalyzes the conversion of rhazimal to rhazimol. The polypeptide is Rhazimal reductase 2 (Alstonia scholaris (Dogbane)).